A 109-amino-acid polypeptide reads, in one-letter code: Cell division protein ZapA (109 aa).

Residues 21 to 99 adopt a coiled-coil conformation; sequence PEQQEALNQA…IEQALLEQGK (79 aa).

The protein belongs to the ZapA family. Type 1 subfamily. In terms of assembly, homodimer. Interacts with FtsZ.

It localises to the cytoplasm. Its function is as follows. Activator of cell division through the inhibition of FtsZ GTPase activity, therefore promoting FtsZ assembly into bundles of protofilaments necessary for the formation of the division Z ring. It is recruited early at mid-cell but it is not essential for cell division. The protein is Cell division protein ZapA of Pectobacterium atrosepticum (strain SCRI 1043 / ATCC BAA-672) (Erwinia carotovora subsp. atroseptica).